A 292-amino-acid polypeptide reads, in one-letter code: Hemin import ATP-binding protein HmuV (292 aa).

Residues 38-271 (LRADGIAVTR…ELLTRVYGHP (234 aa)) enclose the ABC transporter domain. 70 to 77 (GPNGAGKS) contributes to the ATP binding site.

It belongs to the ABC transporter superfamily. Heme (hemin) importer (TC 3.A.1.14.5) family. The complex is composed of two ATP-binding proteins (HmuV), two transmembrane proteins (HmuU) and a solute-binding protein (HmuT).

It localises to the cell membrane. Its function is as follows. Part of the ABC transporter complex HmuTUV involved in hemin import. Responsible for energy coupling to the transport system. This is Hemin import ATP-binding protein HmuV from Rhodococcus jostii (strain RHA1).